We begin with the raw amino-acid sequence, 220 residues long: Small ribosomal subunit protein mS42 (220 aa).

Belongs to the mitochondrion-specific ribosomal protein mS42 family. As to quaternary structure, component of the mitochondrial small ribosomal subunit (mt-SSU). Mature yeast 74S mitochondrial ribosomes consist of a small (37S) and a large (54S) subunit. The 37S small subunit contains a 15S ribosomal RNA (15S mt-rRNA) and at least 32 different proteins. The 54S large subunit contains a 21S rRNA (21S mt-rRNA) and at least 45 different proteins. mS43 forms a dimer with mS42, building a large protuberance adjacent to the mRNA channel exit in the mt-SSU body.

The protein resides in the mitochondrion. Component of the mitochondrial ribosome (mitoribosome), a dedicated translation machinery responsible for the synthesis of mitochondrial genome-encoded proteins, including at least some of the essential transmembrane subunits of the mitochondrial respiratory chain. The mitoribosomes are attached to the mitochondrial inner membrane and translation products are cotranslationally integrated into the membrane. The sequence is that of Small ribosomal subunit protein mS42 from Schizosaccharomyces pombe (strain 972 / ATCC 24843) (Fission yeast).